Here is a 173-residue protein sequence, read N- to C-terminus: Protein tyrosine phosphatase type IVA 3 (173 aa).

The Tyrosine-protein phosphatase domain occupies A8–K161. A disulfide bridge connects residues C49 and C104. D72 serves as the catalytic Proton donor. C104 functions as the Phosphocysteine intermediate in the catalytic mechanism. R110 contacts substrate. Cysteine methyl ester is present on C170. C170 carries the S-farnesyl cysteine lipid modification. The propeptide at C171 to M173 is removed in mature form.

The protein belongs to the protein-tyrosine phosphatase family. Interacts with tubulin. Farnesylated. Farnesylation is required for membrane targeting. Unfarnesylated forms are shifted into the nucleus.

The protein localises to the cell membrane. It localises to the early endosome. It catalyses the reaction O-phospho-L-tyrosyl-[protein] + H2O = L-tyrosyl-[protein] + phosphate. Its activity is regulated as follows. Inhibited by sodium orthovanadate and peroxovanadium compounds, and by pentamidine. Its function is as follows. Protein tyrosine phosphatase which stimulates progression from G1 into S phase during mitosis. Enhances cell proliferation, cell motility and invasive activity, and promotes cancer metastasis. May be involved in the progression of cardiac hypertrophy by inhibiting intracellular calcium mobilization in response to angiotensin II. The protein is Protein tyrosine phosphatase type IVA 3 (PTP4A3) of Bos taurus (Bovine).